The sequence spans 141 residues: MERYQELTVLLLLLLLEGGSGGAGSFRPLCRPTNATLAAESDACPVCVTFTTTICAGYCPSMVRVLPAALPPGPQLVCTYRELTFSWIRLPGCPPGVDPIFSFPVALSCACGSCRLSHSDCGGPRARPHLCTRPHLSLRLL.

The first 21 residues, 1 to 21, serve as a signal peptide directing secretion; sequence MERYQELTVLLLLLLLEGGSG. 6 cysteine pairs are disulfide-bonded: C30–C78, C44–C93, C47–C131, C55–C109, C59–C111, and C114–C121. A glycan (N-linked (GlcNAc...) asparagine) is linked at N34.

Belongs to the glycoprotein hormones subunit beta family. As to quaternary structure, heterodimer of a common alpha chain and a unique beta chain which confers biological specificity to thyrotropin, lutropin, follitropin and gonadotropin.

It localises to the secreted. Promotes spermatogenesis and ovulation by stimulating the testes and ovaries to synthesize steroids. The chain is Lutropin subunit beta (LHB) from Monodelphis domestica (Gray short-tailed opossum).